The chain runs to 186 residues: ATP synthase subunit delta (186 aa).

This sequence belongs to the ATPase delta chain family. In terms of assembly, F-type ATPases have 2 components, F(1) - the catalytic core - and F(0) - the membrane proton channel. F(1) has five subunits: alpha(3), beta(3), gamma(1), delta(1), epsilon(1). F(0) has three main subunits: a(1), b(2) and c(10-14). The alpha and beta chains form an alternating ring which encloses part of the gamma chain. F(1) is attached to F(0) by a central stalk formed by the gamma and epsilon chains, while a peripheral stalk is formed by the delta and b chains.

It is found in the cell inner membrane. Functionally, f(1)F(0) ATP synthase produces ATP from ADP in the presence of a proton or sodium gradient. F-type ATPases consist of two structural domains, F(1) containing the extramembraneous catalytic core and F(0) containing the membrane proton channel, linked together by a central stalk and a peripheral stalk. During catalysis, ATP synthesis in the catalytic domain of F(1) is coupled via a rotary mechanism of the central stalk subunits to proton translocation. This protein is part of the stalk that links CF(0) to CF(1). It either transmits conformational changes from CF(0) to CF(1) or is implicated in proton conduction. The sequence is that of ATP synthase subunit delta from Leptospira borgpetersenii serovar Hardjo-bovis (strain JB197).